Here is a 395-residue protein sequence, read N- to C-terminus: Guanine nucleotide-binding protein subunit beta-5 (395 aa).

7 WD repeats span residues 103–142, 145–184, 193–234, 236–278, 279–318, 320–362, and 365–394; these read GHGNKVLCMDWCKDKRRIVSSSQDGKVIVWDSFTTNKEHA, MPCTWVMACAYAPSGCAIACGGLDNKCSVYPLTFDKNENM, MHTN…QSFH, HGAD…QAFE, THESDINSVRYYPSGDAFASGSDDATCRLYDLRADREVAI, SKES…RVSI, and GHENRVSTLRVSPDGTAFCSGSWDHTLRVW.

The protein belongs to the WD repeat G protein beta family. In terms of assembly, component of a complex composed of RGS9 (isoform RGS9-1), GNB5 and RGS9BP; within this complex, the presence of GNB5 stabilizes both itself and RGS9 and increases RGS9 GTPase-activating protein (GAP) activity. Interacts with RGS7, forming the RGS7-GNB5 complex; within this complex, the presence of GNB5 increases RGS7 GTPase-activating protein (GAP) activity. Interacts with GPR158; promotes the GTPase activator activity of the RGS7-GNB5 complex in absence of glycine, in contrast GTPase activator activity of the RGS7-GNB5 complex is inhibited in presence of glycine. Interacts with RGS6. In terms of tissue distribution, widely expressed.

It is found in the membrane. Its function is as follows. Enhances GTPase-activating protein (GAP) activity of regulator of G protein signaling (RGS) proteins, such as RGS7 and RGS9, hence involved in the termination of the signaling initiated by the G protein coupled receptors (GPCRs) by accelerating the GTP hydrolysis on the G-alpha subunits, thereby promoting their inactivation. Increases RGS7 GTPase-activating protein (GAP) activity, thereby regulating mood and cognition. Increases RGS9 GTPase-activating protein (GAP) activity, hence contributes to the deactivation of G protein signaling initiated by D(2) dopamine receptors. May play an important role in neuronal signaling, including in the parasympathetic, but not sympathetic, control of heart rate. The polypeptide is Guanine nucleotide-binding protein subunit beta-5 (GNB5) (Homo sapiens (Human)).